Consider the following 253-residue polypeptide: tRNA (guanine-N(7)-)-methyltransferase (253 aa).

The segment covering 1–12 has biased composition (pro residues); it reads MSQTPMPQPDQA. The tract at residues 1-39 is disordered; sequence MSQTPMPQPDQAPPVDVGQPVDEAEAKRRRFKTHGRKKG. Basic residues predominate over residues 27–39; the sequence is KRRRFKTHGRKKG. 4 residues coordinate S-adenosyl-L-methionine: Glu84, Asp109, Asn136, and Asp159. Asp159 is an active-site residue. Substrate is bound by residues Lys163, Asp195, and 232 to 235; that span reads TNFE.

The protein belongs to the class I-like SAM-binding methyltransferase superfamily. TrmB family.

It carries out the reaction guanosine(46) in tRNA + S-adenosyl-L-methionine = N(7)-methylguanosine(46) in tRNA + S-adenosyl-L-homocysteine. It participates in tRNA modification; N(7)-methylguanine-tRNA biosynthesis. Catalyzes the formation of N(7)-methylguanine at position 46 (m7G46) in tRNA. This chain is tRNA (guanine-N(7)-)-methyltransferase, found in Magnetococcus marinus (strain ATCC BAA-1437 / JCM 17883 / MC-1).